The chain runs to 387 residues: Phosphoglycerate kinase (387 aa).

Substrate is bound by residues 21-23 (DLN), Arg-36, 59-62 (HLGR), Arg-113, and Arg-146. Residues Lys-197, Glu-314, and 340–343 (GGDT) each bind ATP.

The protein belongs to the phosphoglycerate kinase family. In terms of assembly, monomer.

It is found in the cytoplasm. It carries out the reaction (2R)-3-phosphoglycerate + ATP = (2R)-3-phospho-glyceroyl phosphate + ADP. It functions in the pathway carbohydrate degradation; glycolysis; pyruvate from D-glyceraldehyde 3-phosphate: step 2/5. The protein is Phosphoglycerate kinase of Pseudomonas putida (strain W619).